The chain runs to 477 residues: D(1B) dopamine receptor (477 aa).

Topologically, residues 1 to 39 (MLPPGSNGTAYPGQFALYQQLAQGNAVGGSAGAPPLGPS) are extracellular. Asn7 carries N-linked (GlcNAc...) asparagine glycosylation. Residues 40-66 (QVVTACLLTLLIIWTLLGNVLVCAAIV) form a helical membrane-spanning segment. The Cytoplasmic portion of the chain corresponds to 67 to 77 (RSRHLRANMTN). Residues 78-104 (VFIVSLAVSDLFVALLVMPWKAVAEVA) form a helical membrane-spanning segment. Residues 105–114 (GYWPFGAFCD) are Extracellular-facing. Cys113 and Cys217 are oxidised to a cystine. Residues 115-136 (VWVAFDIMCSTASILNLCVISV) traverse the membrane as a helical segment. Residues 137–158 (DRYWAISRPFRYKRKMTQRMAL) are Cytoplasmic-facing. The chain crosses the membrane as a helical span at residues 159-180 (VMVGLAWTLSILISFIPVQLNW). Residues 181–223 (HRDQAASWGGLDLPNNLANWTPWEEDFWEPDVNAENCDSSLNR) lie on the Extracellular side of the membrane. Asn222 is a glycosylation site (N-linked (GlcNAc...) asparagine). A helical transmembrane segment spans residues 224 to 246 (TYAISSSLISFYIPVAIMIVTYT). The Cytoplasmic portion of the chain corresponds to 247 to 296 (RIYRIAQVQIRRISSLERAAEHAQSCRSSAACAPDTSLRASIKKETKVLK). A helical membrane pass occupies residues 297 to 320 (TLSVIMGVFVCCWLPFFILNCMVP). Residues 321–340 (FCSGHPEGPPAGFPCVSETT) lie on the Extracellular side of the membrane. Residues 341-360 (FDVFVWFGWANSSLNPVIYA) form a helical membrane-spanning segment. Residues 361–477 (FNADFQKVFA…ITPFTPNGFH (117 aa)) are Cytoplasmic-facing. Residue Cys375 is the site of S-palmitoyl cysteine attachment.

The protein belongs to the G-protein coupled receptor 1 family. Neuron-specific, localized primarily within limbic regions of the brain.

It is found in the cell membrane. In terms of biological role, dopamine receptor whose activity is mediated by G proteins which activate adenylyl cyclase. The sequence is that of D(1B) dopamine receptor (DRD5) from Homo sapiens (Human).